Reading from the N-terminus, the 30-residue chain is Dermaseptin-DI4 (30 aa).

In terms of tissue distribution, expressed by the skin glands.

Its subcellular location is the secreted. Antibacterial activity against Gram-positive bacteria S.aureus and E.faecalis, and Gram-negative bacteria P.aeruginosa and E.coli. The polypeptide is Dermaseptin-DI4 (Phyllomedusa distincta (Monkey frog)).